Consider the following 777-residue polypeptide: Endonuclease MutS2 (777 aa).

328–335 (GPNTGGKT) lines the ATP pocket. The 76-residue stretch at 702 to 777 (LDIRGMNTLE…GDGATEVYLK (76 aa)) folds into the Smr domain.

The protein belongs to the DNA mismatch repair MutS family. MutS2 subfamily. Homodimer. Binds to stalled ribosomes, contacting rRNA.

In terms of biological role, endonuclease that is involved in the suppression of homologous recombination and thus may have a key role in the control of bacterial genetic diversity. Acts as a ribosome collision sensor, splitting the ribosome into its 2 subunits. Detects stalled/collided 70S ribosomes which it binds and splits by an ATP-hydrolysis driven conformational change. Acts upstream of the ribosome quality control system (RQC), a ribosome-associated complex that mediates the extraction of incompletely synthesized nascent chains from stalled ribosomes and their subsequent degradation. Probably generates substrates for RQC. This Carboxydothermus hydrogenoformans (strain ATCC BAA-161 / DSM 6008 / Z-2901) protein is Endonuclease MutS2.